A 160-amino-acid polypeptide reads, in one-letter code: Phosphatidylinositol N-acetylglucosaminyltransferase subunit gpi15 (160 aa).

2 helical membrane-spanning segments follow: residues 22 to 42 and 48 to 68; these read GTQMFALCFISFVIGATSLAI and IIITLVELSFLLSLFHIISGV.

It belongs to the PIGH family.

It localises to the endoplasmic reticulum membrane. It carries out the reaction a 1,2-diacyl-sn-glycero-3-phospho-(1D-myo-inositol) + UDP-N-acetyl-alpha-D-glucosamine = a 6-(N-acetyl-alpha-D-glucosaminyl)-1-(1,2-diacyl-sn-glycero-3-phospho)-1D-myo-inositol + UDP + H(+). It participates in glycolipid biosynthesis; glycosylphosphatidylinositol-anchor biosynthesis. Its function is as follows. Part of the complex catalyzing the transfer of N-acetylglucosamine from UDP-N-acetylglucosamine to phosphatidylinositol, the first step of GPI biosynthesis. This chain is Phosphatidylinositol N-acetylglucosaminyltransferase subunit gpi15 (gpi15), found in Schizosaccharomyces pombe (strain 972 / ATCC 24843) (Fission yeast).